A 293-amino-acid polypeptide reads, in one-letter code: 4-diphosphocytidyl-2-C-methyl-D-erythritol kinase (293 aa).

Lys16 is a catalytic residue. Pro99–Ser109 contacts ATP. Residue Asp141 is part of the active site.

This sequence belongs to the GHMP kinase family. IspE subfamily.

The catalysed reaction is 4-CDP-2-C-methyl-D-erythritol + ATP = 4-CDP-2-C-methyl-D-erythritol 2-phosphate + ADP + H(+). The protein operates within isoprenoid biosynthesis; isopentenyl diphosphate biosynthesis via DXP pathway; isopentenyl diphosphate from 1-deoxy-D-xylulose 5-phosphate: step 3/6. Its function is as follows. Catalyzes the phosphorylation of the position 2 hydroxy group of 4-diphosphocytidyl-2C-methyl-D-erythritol. The chain is 4-diphosphocytidyl-2-C-methyl-D-erythritol kinase from Burkholderia multivorans (strain ATCC 17616 / 249).